Here is a 105-residue protein sequence, read N- to C-terminus: Small ribosomal subunit protein uS10 (105 aa).

The protein belongs to the universal ribosomal protein uS10 family. In terms of assembly, part of the 30S ribosomal subunit.

Its function is as follows. Involved in the binding of tRNA to the ribosomes. In Rickettsia peacockii (strain Rustic), this protein is Small ribosomal subunit protein uS10.